Here is a 382-residue protein sequence, read N- to C-terminus: S-adenosylmethionine synthase (382 aa).

Position 16 (histidine 16) interacts with ATP. Aspartate 18 is a binding site for Mg(2+). Residue glutamate 44 coordinates K(+). L-methionine is bound by residues glutamate 57 and glutamine 100. The segment at glutamine 100–asparagine 110 is flexible loop. Residues aspartate 165–lysine 167, arginine 231–phenylalanine 232, aspartate 240, arginine 246–lysine 247, and lysine 267 contribute to the ATP site. Aspartate 240 is a binding site for L-methionine. Lysine 271 serves as a coordination point for L-methionine.

The protein belongs to the AdoMet synthase family. As to quaternary structure, homotetramer; dimer of dimers. Mg(2+) serves as cofactor. K(+) is required as a cofactor.

It localises to the cytoplasm. The catalysed reaction is L-methionine + ATP + H2O = S-adenosyl-L-methionine + phosphate + diphosphate. The protein operates within amino-acid biosynthesis; S-adenosyl-L-methionine biosynthesis; S-adenosyl-L-methionine from L-methionine: step 1/1. Functionally, catalyzes the formation of S-adenosylmethionine (AdoMet) from methionine and ATP. The overall synthetic reaction is composed of two sequential steps, AdoMet formation and the subsequent tripolyphosphate hydrolysis which occurs prior to release of AdoMet from the enzyme. In Legionella pneumophila (strain Lens), this protein is S-adenosylmethionine synthase.